The primary structure comprises 839 residues: Protein translocase subunit SecA (839 aa).

ATP contacts are provided by residues Q85, 103–107 (GEGKT), and D493. Residues 780 to 790 (QIHEQERERAS) show a composition bias toward basic and acidic residues. The tract at residues 780 to 839 (QIHEQERERASQRATTAAPQNIQSQQSANTDDLPKVERNEACPCGSGKKFKNCHGRKSFS) is disordered. The segment covering 791-809 (QRATTAAPQNIQSQQSANT) has biased composition (polar residues). 4 residues coordinate Zn(2+): C821, C823, C832, and H833. Positions 827 to 839 (KKFKNCHGRKSFS) are enriched in basic residues.

Belongs to the SecA family. As to quaternary structure, monomer and homodimer. Part of the essential Sec protein translocation apparatus which comprises SecA, SecYEG and auxiliary proteins SecDF. Other proteins may also be involved. Requires Zn(2+) as cofactor.

The protein localises to the cell membrane. The protein resides in the cytoplasm. It catalyses the reaction ATP + H2O + cellular proteinSide 1 = ADP + phosphate + cellular proteinSide 2.. Part of the Sec protein translocase complex. Interacts with the SecYEG preprotein conducting channel. Has a central role in coupling the hydrolysis of ATP to the transfer of proteins into and across the cell membrane, serving as an ATP-driven molecular motor driving the stepwise translocation of polypeptide chains across the membrane. This Streptococcus pyogenes serotype M28 (strain MGAS6180) protein is Protein translocase subunit SecA.